The chain runs to 131 residues: Small ribosomal subunit protein uS11 (131 aa).

It belongs to the universal ribosomal protein uS11 family. As to quaternary structure, part of the 30S ribosomal subunit.

In terms of biological role, located on the platform of the 30S subunit. The chain is Small ribosomal subunit protein uS11 from Haloquadratum walsbyi (strain DSM 16790 / HBSQ001).